The chain runs to 442 residues: 3-ketoacyl-CoA thiolase (442 aa).

Cys-105 functions as the Acyl-thioester intermediate in the catalytic mechanism. Residues His-398 and Cys-428 each act as proton acceptor in the active site.

Belongs to the thiolase-like superfamily. Thiolase family. In terms of assembly, heterotetramer of two alpha chains (FadJ) and two beta chains (FadI).

It localises to the cytoplasm. It catalyses the reaction an acyl-CoA + acetyl-CoA = a 3-oxoacyl-CoA + CoA. The protein operates within lipid metabolism; fatty acid beta-oxidation. Catalyzes the final step of fatty acid oxidation in which acetyl-CoA is released and the CoA ester of a fatty acid two carbons shorter is formed. In Aliivibrio fischeri (strain MJ11) (Vibrio fischeri), this protein is 3-ketoacyl-CoA thiolase.